A 387-amino-acid chain; its full sequence is Protein kinase gsk3 (387 aa).

Residues 32 to 316 form the Protein kinase domain; that stretch reads YTSSKVVGSG…AAEAMCHPFF (285 aa). ATP-binding positions include 38-46 and K61; that span reads VGSGSFGVV. The active-site Proton acceptor is D157. S191 bears the Phosphoserine mark. Phosphotyrosine; by autocatalysis is present on Y192. S335 carries the phosphoserine modification.

The protein belongs to the protein kinase superfamily. CMGC Ser/Thr protein kinase family. GSK-3 subfamily. In terms of processing, autophosphorylated on tyrosine residues.

Its subcellular location is the cytoplasm. The protein resides in the nucleus. It carries out the reaction L-seryl-[protein] + ATP = O-phospho-L-seryl-[protein] + ADP + H(+). The catalysed reaction is L-threonyl-[protein] + ATP = O-phospho-L-threonyl-[protein] + ADP + H(+). Functionally, interacts with cdc14 which is thought to play a role in the initiation and completion of mitosis. Involved in the positive regulation of mis12. In Schizosaccharomyces pombe (strain 972 / ATCC 24843) (Fission yeast), this protein is Protein kinase gsk3 (gsk3).